Here is a 259-residue protein sequence, read N- to C-terminus: uncharacterized protein (259 aa).

The signal sequence occupies residues 1–22 (MKHSKKLLLCISFLLITVFISG). The N-palmitoyl cysteine moiety is linked to residue C23. A lipid anchor (S-diacylglycerol cysteine) is attached at C23.

It belongs to the staphylococcal tandem lipoprotein family.

It is found in the cell membrane. This is an uncharacterized protein from Staphylococcus epidermidis (strain ATCC 35984 / DSM 28319 / BCRC 17069 / CCUG 31568 / BM 3577 / RP62A).